We begin with the raw amino-acid sequence, 552 residues long: CTP synthase (552 aa).

The interval Met-1–Leu-270 is amidoligase domain. CTP is bound at residue Ser-13. A UTP-binding site is contributed by Ser-13. ATP is bound by residues Ser-14–Ile-19 and Asp-71. Positions 71 and 144 each coordinate Mg(2+). Residues Asp-151–Glu-153, Lys-191–Gln-196, and Lys-227 contribute to the CTP site. Residues Lys-191–Gln-196 and Lys-227 contribute to the UTP site. Residues Gln-295 to Pro-548 enclose the Glutamine amidotransferase type-1 domain. Residue Gly-357 participates in L-glutamine binding. Cys-384 acts as the Nucleophile; for glutamine hydrolysis in catalysis. L-glutamine-binding positions include Leu-385–Gln-388 and Glu-408. Residues Lys-432 to Ser-451 form a disordered region. Arg-474 is an L-glutamine binding site. Residues His-521 and Glu-523 contribute to the active site.

This sequence belongs to the CTP synthase family. In terms of assembly, homotetramer.

The enzyme catalyses UTP + L-glutamine + ATP + H2O = CTP + L-glutamate + ADP + phosphate + 2 H(+). It carries out the reaction L-glutamine + H2O = L-glutamate + NH4(+). The catalysed reaction is UTP + NH4(+) + ATP = CTP + ADP + phosphate + 2 H(+). It participates in pyrimidine metabolism; CTP biosynthesis via de novo pathway; CTP from UDP: step 2/2. With respect to regulation, allosterically activated by GTP, when glutamine is the substrate; GTP has no effect on the reaction when ammonia is the substrate. The allosteric effector GTP functions by stabilizing the protein conformation that binds the tetrahedral intermediate(s) formed during glutamine hydrolysis. Inhibited by the product CTP, via allosteric rather than competitive inhibition. In terms of biological role, catalyzes the ATP-dependent amination of UTP to CTP with either L-glutamine or ammonia as the source of nitrogen. Regulates intracellular CTP levels through interactions with the four ribonucleotide triphosphates. In Acidovorax sp. (strain JS42), this protein is CTP synthase.